Here is a 681-residue protein sequence, read N- to C-terminus: Pumilio domain-containing protein C6G9.14 (681 aa).

2 disordered regions span residues 180-210 (RPGL…PGLI) and 273-322 (ASTA…NVPS). Low complexity-rich tracts occupy residues 187-210 (TPGP…PGLI) and 273-286 (ASTA…SSGS). The PUM-HD domain occupies 319-659 (NVPSLISDDP…RILSKLERRH (341 aa)). Pumilio repeat units lie at residues 342 to 378 (SLQN…AVFA), 379 to 414 (ETHP…TFIQ), 415 to 451 (IIAP…CIVN), 452 to 487 (ALRP…FIFD), 488 to 523 (AICE…QLVE), 524 to 559 (HIVP…AIIS), 560 to 595 (YFLY…KLIS), and 596 to 633 (ELMD…ELVE). Residues 656–666 (ERRHPSSKEKP) show a composition bias toward basic and acidic residues. Residues 656-681 (ERRHPSSKEKPIVYSNSERVNTSSSA) are disordered. Positions 669–681 (YSNSERVNTSSSA) are enriched in polar residues.

This is Pumilio domain-containing protein C6G9.14 from Schizosaccharomyces pombe (strain 972 / ATCC 24843) (Fission yeast).